A 522-amino-acid polypeptide reads, in one-letter code: MTAQNTFDVIVIGGGISGLSAAKLLKEKGLSPVVLEARDRVGGRTFTVQNEQTKYVDLGGAYVGPTQNRILRLAKECGVKTIKVNEEERLVHYVKGKSYPFKGSFPPMWNPFALMDYNNLWRKMDEMGSEIPREAPWKAPHAEEWDKMTMKQLFDKICWTSSARRFATLFVNVNVTSEPHEVSALWFLWYVKQCGGTMRIFSTTNGGQERKFLGGSSQISECMAKELGERVKMESPVYKIDQTGDMVEVETLNKETYKAKYVIVATPPGLNLKMHFNPELPPLRNQLIHRVPMGSVIKCIVYYRENFWRKKGYCGTMVIEEEEAPIGLTLDDTKPDGTVPAIMGFILARKCRKLCGLTKEERKKRICEIYSRVLGSEEALHPVHYEEKNWCEEEYSGGCYTAYFPPGILTQYGKVLREPVGRLYFAGTETATEWSGYMEGAVQAGERAAREVMYEMGRIPQSQIWQTEPESVEVPALPFVTTFWERNLPSVGGFINFLAASVLSVATAAGMLAYQKGLLTRS.

Over 1–492 (MTAQNTFDVI…FWERNLPSVG (492 aa)) the chain is Cytoplasmic. Position 399 is an S-8alpha-FAD cysteine (Cys-399). The chain crosses the membrane as a helical; Anchor for type IV membrane protein span at residues 493–513 (GFINFLAASVLSVATAAGMLA). Over 514–522 (YQKGLLTRS) the chain is Mitochondrial intermembrane.

It belongs to the flavin monoamine oxidase family. FAD is required as a cofactor.

It is found in the mitochondrion outer membrane. The enzyme catalyses a secondary aliphatic amine + O2 + H2O = a primary amine + an aldehyde + H2O2. In terms of biological role, catalyzes the oxidative deamination of biogenic and xenobiotic amines and has important functions in the metabolism of neuroactive and vasoactive amines in the central nervous system and peripheral tissues. Oxidizes both 5-hydroxytryptamine (5-HT) and beta-phenylethylamine (PEA). This Oncorhynchus mykiss (Rainbow trout) protein is Amine oxidase [flavin-containing] (mao).